A 128-amino-acid polypeptide reads, in one-letter code: Large ribosomal subunit protein bL19 (128 aa).

Belongs to the bacterial ribosomal protein bL19 family.

Its function is as follows. This protein is located at the 30S-50S ribosomal subunit interface and may play a role in the structure and function of the aminoacyl-tRNA binding site. The polypeptide is Large ribosomal subunit protein bL19 (Janthinobacterium sp. (strain Marseille) (Minibacterium massiliensis)).